The primary structure comprises 80 residues: Large ribosomal subunit protein uL24 (80 aa).

This sequence belongs to the universal ribosomal protein uL24 family. In terms of assembly, part of the 50S ribosomal subunit.

One of two assembly initiator proteins, it binds directly to the 5'-end of the 23S rRNA, where it nucleates assembly of the 50S subunit. In terms of biological role, one of the proteins that surrounds the polypeptide exit tunnel on the outside of the subunit. The protein is Large ribosomal subunit protein uL24 of Chlorobium phaeobacteroides (strain BS1).